Consider the following 185-residue polypeptide: Peptide deformylase (185 aa).

Fe cation-binding residues include Cys-109 and His-152. Residue Glu-153 is part of the active site. His-156 serves as a coordination point for Fe cation.

This sequence belongs to the polypeptide deformylase family. It depends on Fe(2+) as a cofactor.

The catalysed reaction is N-terminal N-formyl-L-methionyl-[peptide] + H2O = N-terminal L-methionyl-[peptide] + formate. Its function is as follows. Removes the formyl group from the N-terminal Met of newly synthesized proteins. Requires at least a dipeptide for an efficient rate of reaction. N-terminal L-methionine is a prerequisite for activity but the enzyme has broad specificity at other positions. This chain is Peptide deformylase, found in Roseiflexus castenholzii (strain DSM 13941 / HLO8).